A 205-amino-acid polypeptide reads, in one-letter code: Helix-loop-helix protein 4 (205 aa).

The interval 3-16 (MVVAKRNARERTRV) is basic motif. Residues 3-56 (MVVAKRNARERTRVHTVNQAFLVLKQHLPSLRQFTKRVSKLRILNAAITYIDTL) form the bHLH domain. The interval 17–56 (HTVNQAFLVLKQHLPSLRQFTKRVSKLRILNAAITYIDTL) is helix-loop-helix motif.

As to expression, expressed in the ADL sensory neurons.

It is found in the nucleus. In terms of biological role, acts as a transcriptional regulator. May mediate transcriptional activation by binding to the E-box motif 5'-CANNTG-3'. Required for the correct morphology, terminal identity and function of the ADL sensory neurons by controlling the expression of the ADL-specific gene repertoire, including chemoreceptor encoding genes, ion channel encoding genes, neuropeptides and the neurotransmitter eat-4. Regulates the expression of the srh-234 chemoreceptor encoding gene in the ADL neurons under feeding conditions. Plays a role in the chemorepulsive response toward ascaroside pheromones mediated by the ADL sensory neurons. The polypeptide is Helix-loop-helix protein 4 (hlh-4) (Caenorhabditis elegans).